The chain runs to 163 residues: SsrA-binding protein (163 aa).

Belongs to the SmpB family.

It localises to the cytoplasm. Its function is as follows. Required for rescue of stalled ribosomes mediated by trans-translation. Binds to transfer-messenger RNA (tmRNA), required for stable association of tmRNA with ribosomes. tmRNA and SmpB together mimic tRNA shape, replacing the anticodon stem-loop with SmpB. tmRNA is encoded by the ssrA gene; the 2 termini fold to resemble tRNA(Ala) and it encodes a 'tag peptide', a short internal open reading frame. During trans-translation Ala-aminoacylated tmRNA acts like a tRNA, entering the A-site of stalled ribosomes, displacing the stalled mRNA. The ribosome then switches to translate the ORF on the tmRNA; the nascent peptide is terminated with the 'tag peptide' encoded by the tmRNA and targeted for degradation. The ribosome is freed to recommence translation, which seems to be the essential function of trans-translation. The polypeptide is SsrA-binding protein (Corynebacterium diphtheriae (strain ATCC 700971 / NCTC 13129 / Biotype gravis)).